The primary structure comprises 337 residues: ATP-dependent 6-phosphofructokinase (337 aa).

Gly11 lines the ATP pocket. 21-25 provides a ligand contact to ADP; sequence RAVVR. Residues 72 to 73 and 102 to 105 contribute to the ATP site; these read RY and GDGS. Asp103 provides a ligand contact to Mg(2+). 125 to 127 provides a ligand contact to substrate; that stretch reads TID. Asp127 functions as the Proton acceptor in the catalytic mechanism. Position 154 (Arg154) interacts with ADP. Substrate-binding positions include Arg162 and 169–171; that span reads MGR. Residues 185-187, Arg212, and 214-216 each bind ADP; these read GAD and KNH. Residues Glu223, Arg245, and 251 to 254 contribute to the substrate site; that span reads HILR.

It belongs to the phosphofructokinase type A (PFKA) family. ATP-dependent PFK group I subfamily. Prokaryotic clade 'B1' sub-subfamily. In terms of assembly, homotetramer. It depends on Mg(2+) as a cofactor.

It is found in the cytoplasm. The catalysed reaction is beta-D-fructose 6-phosphate + ATP = beta-D-fructose 1,6-bisphosphate + ADP + H(+). It participates in carbohydrate degradation; glycolysis; D-glyceraldehyde 3-phosphate and glycerone phosphate from D-glucose: step 3/4. With respect to regulation, allosterically activated by ADP and other diphosphonucleosides, and allosterically inhibited by phosphoenolpyruvate. Catalyzes the phosphorylation of D-fructose 6-phosphate to fructose 1,6-bisphosphate by ATP, the first committing step of glycolysis. The polypeptide is ATP-dependent 6-phosphofructokinase (Streptococcus equi subsp. zooepidemicus (strain H70)).